Reading from the N-terminus, the 595-residue chain is Protein halfway (595 aa).

2 disordered regions span residues 1-42 (MLLT…ADDE) and 64-98 (TGAA…PLLP). Asparagine 250 and asparagine 255 each carry an N-linked (GlcNAc...) asparagine glycan. One can recognise an LRRNT domain in the interval 347 to 402 (ESTKRCMTKCPVIPNYGSCKCRFESIMIIQDDQSKPKCHVDCSNLGLVELPPRLPD). LRR repeat units lie at residues 403–424 (NTFV…FQTN), 429–450 (NINR…EGTK), and 454–475 (NFQR…FLNN). The LRRCT domain occupies 489-538 (NKLQCDCNSAKTLQNWLKERSTDIPDYMEIRCRNIPQSVIELQEAKLCQS).

In terms of biological role, has a role in the ecdysone induced cascade; probably indirect control of 'late' ecdysone genes. The chain is Protein halfway (hfw) from Drosophila pseudoobscura pseudoobscura (Fruit fly).